We begin with the raw amino-acid sequence, 642 residues long: Threonine--tRNA ligase (642 aa).

Positions methionine 1 to threonine 61 constitute a TGS domain. The tract at residues aspartate 243–proline 534 is catalytic. At lysine 286 the chain carries N6-acetyllysine. Zn(2+)-binding residues include cysteine 334, histidine 385, and histidine 511.

Belongs to the class-II aminoacyl-tRNA synthetase family. Homodimer. Zn(2+) serves as cofactor.

It is found in the cytoplasm. The enzyme catalyses tRNA(Thr) + L-threonine + ATP = L-threonyl-tRNA(Thr) + AMP + diphosphate + H(+). Catalyzes the attachment of threonine to tRNA(Thr) in a two-step reaction: L-threonine is first activated by ATP to form Thr-AMP and then transferred to the acceptor end of tRNA(Thr). Also edits incorrectly charged L-seryl-tRNA(Thr). The sequence is that of Threonine--tRNA ligase from Shigella dysenteriae serotype 1 (strain Sd197).